We begin with the raw amino-acid sequence, 358 residues long: S-adenosylmethionine:tRNA ribosyltransferase-isomerase (358 aa).

It belongs to the QueA family. Monomer.

The protein resides in the cytoplasm. It catalyses the reaction 7-aminomethyl-7-carbaguanosine(34) in tRNA + S-adenosyl-L-methionine = epoxyqueuosine(34) in tRNA + adenine + L-methionine + 2 H(+). Its pathway is tRNA modification; tRNA-queuosine biosynthesis. Its function is as follows. Transfers and isomerizes the ribose moiety from AdoMet to the 7-aminomethyl group of 7-deazaguanine (preQ1-tRNA) to give epoxyqueuosine (oQ-tRNA). The sequence is that of S-adenosylmethionine:tRNA ribosyltransferase-isomerase from Rhodopseudomonas palustris (strain BisA53).